We begin with the raw amino-acid sequence, 3674 residues long: Dystrophin-1 (3674 aa).

A disordered region spans residues 1–25 (MLFSGASTAKPKKDEKKDKKSDRDP). Positions 11 to 25 (PKKDEKKDKKSDRDP) are enriched in basic and acidic residues. The interval 30–39 (QEWVFVRWAN) is actin-binding. Positions 129 to 234 (EKLSEAIKQW…YLMSLYLAMI (106 aa)) constitute a Calponin-homology (CH) domain. Residues 265-325 (SQPSTSSSSA…KSGKSKKARR (61 aa)) are disordered. 3 Spectrin repeats span residues 327–435 (EQLA…VLQQ), 436–541 (QIHL…KLDG), and 612–656 (CELV…TLVK). Basic and acidic residues predominate over residues 655–674 (VKSGKADVKQVQESQNEQKE). Disordered stretches follow at residues 655–689 (VKSG…TEGE), 968–991 (NSQM…EKRR), 1587–1606 (ASAE…SSPS), 1796–1833 (LSAT…SRSS), and 2387–2466 (MNDS…GSTG). Residues 675-685 (QPASSEGLSTD) are compositionally biased toward polar residues. Over residues 975-991 (TVEKAETRKAEMEEKRR) the composition is skewed to basic and acidic residues. The segment covering 1796–1830 (LSATEKKPVETVKSTIPDRPEVPEEPEKSSPDRTS) has biased composition (basic and acidic residues). Residues 2391–2411 (GGDTTESRSTVVEMTSVHTKQ) are compositionally biased toward polar residues. Spectrin repeat units follow at residues 2576 to 2673 (RNEM…VLEA), 2725 to 2789 (FKTL…RLEK), 2792 to 2905 (QEWE…RLKK), and 2926 to 3032 (QRLQ…AVRN). A WW domain is found at 3047–3081 (QSVTLPWQRAISKSNLLPYYIEQTSEKTQWEHPVW). A ZZ-type zinc finger spans residues 3301–3357 (KHASKCNVCKMFPIIGIRYRCLTCFNCDLCQNCFFSQRTAKSHRTNHPMQEYCEKTT). 8 residues coordinate Zn(2+): Cys3306, Cys3309, Cys3321, Cys3324, Cys3330, Cys3333, His3343, and His3347. Disordered regions lie at residues 3481–3522 (STME…TQSQ) and 3568–3645 (KQQA…QMQN). The segment covering 3568–3579 (KQQAPLSTNSLL) has biased composition (polar residues).

As to quaternary structure, component of the dystrophin glycoprotein complex (DGC). Interacts with dyb-1 and stn-1 to form the DGC. Interacts with stn-2. As to expression, expressed in body wall, head, pharyngeal and vulval muscles, from late embryogenesis to adulthood (at protein level).

It is found in the cell membrane. The protein resides in the sarcolemma. The protein localises to the cytoplasm. It localises to the cytoskeleton. Plays a role in cholinergic transmission and as a functional partner of dystrobrevin (dyb-1), necessary for muscle maintenance. Required for neuronal positioning. May play a role in the localization of slo-1 near dense bodies in the muscle. The chain is Dystrophin-1 (dys-1) from Caenorhabditis elegans.